The primary structure comprises 1208 residues: MDSLPDEFFVRHPAVEDQRKEETENKLEKSSGQLNKQENDIPTDLVPVNLLLEVKKLLNAINTLPKGVVPHIKKFLQEDFSFQTMQREVAANSQNGEEIVPALTLRFLITQLEAALRNIQAGNYTAHQINIGYYLTLLFLYGVALTERGKKEDYTEAENKFLVMKMMIQENEICENFMSLVYFGRGLLRCAQKRYNGGLLEFHKSLQEIGDKNDHWFDIDPTEDEDLPTTFKDLLNNFIKTTESNIMKQTICSYLDCERSCEADILKNTSYKGFFQLMCSKSCCVYFHKICWKKFKNLKYPGENDQSFSGKKCLKEGCTGDMVRMLQCDVPGIVKILFEVVRKDEYITIENLGASYRKLISLKITDTDIRPKISLKFNTKDEMPIFKLDYNYFYHLLHIIIISGTDIVRQIFDEAMPPPLLKKELLIHKNVLESYYNHLWTNHPLGGSWHLLYPPNKELPQSKQFDLCLLLALIKHLNVFPAPKKGWNMEPPSSDISKSADILRLCKYRDILLSEILMNGLTESQFNSIWKKVSDILLRLGMMQEDIDKVKENPIENISLDYHQLSVYLGIPVPEIIQRMLSCYQQGIALQSITGSQRIEIEELQNEEEELSPPLMEYNINVKSHPEIQFAEINKDGTSIPSESSTESLKDLQEVKSKQRKKKKTKNKKNKDSKEDQVPYVVEKEEQLRKEQANPHSVSRLIKDDASDVQEDSAMEDKFYSLDELHILDMIEQGSAGKVTTDYGETEKERLARQRQLYKLHYQCEDFKRQLRTVTFRWQENQMQIKKKDKIIASLNQQVAFGINKVSKLQRQIHAKDNEIKNLKEQLSMKRSQWEMEKHNLESTMKTYVSKLNAETSRALTAEVYFLQCRRDFGLLHLEQTEKECLNQLARVTHMAASNLESLQLKAAVDSWNAIVADVRNKIAFLRTQYNEQINKVKQGFALSTLPPVQLPPPPPSPEILMQQFLGRPLVKESFFRPILTVPQMPAVCPGVVSATGQPRAPLMTGIAWALPAPVGDAVPPSAGLRSDPSIMNWERITDRLKTAFPQQTRKELTDFLRKLKDAYGKSLSELTFDEIVCKISQFIDPKKSQSQGKSVSNVNCVSPSHSPSQPDAAQPPKPAWRPLTSQGPATWEGASNPDEEEEEEEPCVICHENLSPENLSVLPCAHKFHAQCIRPWLMQQGTCPTCRLHVLLPEEFPGHPSRQLPKI.

Basic and acidic residues predominate over residues 10 to 29 (VRHPAVEDQRKEETENKLEK). Disordered stretches follow at residues 10 to 38 (VRHP…NKQE) and 637 to 698 (GTSI…PHSV). Coiled-coil stretches lie at residues 14–43 (AVED…DIPT), 647–676 (ESLK…SKED), 792–853 (IASL…SKLN), and 904–939 (QLKA…KVKQ). Residues 637–647 (GTSIPSESSTE) are compositionally biased toward polar residues. Basic and acidic residues predominate over residues 648 to 657 (SLKDLQEVKS). The span at 658-669 (KQRKKKKTKNKK) shows a compositional bias: basic residues. Residues 670–693 (NKDSKEDQVPYVVEKEEQLRKEQA) are compositionally biased toward basic and acidic residues. Positions 1088-1145 (KSQSQGKSVSNVNCVSPSHSPSQPDAAQPPKPAWRPLTSQGPATWEGASNPDEEEEEE) are disordered. Residues 1089-1112 (SQSQGKSVSNVNCVSPSHSPSQPD) show a composition bias toward polar residues. Residues 1148 to 1188 (CVICHENLSPENLSVLPCAHKFHAQCIRPWLMQQGTCPTCR) form an RING-type; atypical zinc finger.

Interacts with DAZ proteins. As to expression, widely expressed at low level. Highly expressed in skeletal muscle, kidney and heart. Expressed at low level in placenta, lung, brain, liver and pancreas.

Its subcellular location is the cytoplasm. It catalyses the reaction S-ubiquitinyl-[E2 ubiquitin-conjugating enzyme]-L-cysteine + [acceptor protein]-L-lysine = [E2 ubiquitin-conjugating enzyme]-L-cysteine + N(6)-ubiquitinyl-[acceptor protein]-L-lysine.. The protein operates within protein modification; protein ubiquitination. Its function is as follows. E3 Ubiquitin ligase proteins mediate ubiquitination and subsequent proteasomal degradation of target proteins. E3 ubiquitin ligases accept ubiquitin from an E2 ubiquitin-conjugating enzyme in the form of a thioester and then directly transfers the ubiquitin to targeted substrates. Able to specifically bind RNA. The polypeptide is E3 ubiquitin-protein ligase DZIP3 (DZIP3) (Homo sapiens (Human)).